The chain runs to 415 residues: Acrosin (415 aa).

The N-terminal stretch at 1 to 16 (MLPTAVLLVLAVSVAA) is a signal peptide. Asn-19 is a glycosylation site (N-linked (GlcNAc...) asparagine). 6 disulfides stabilise this stretch: Cys-22–Cys-152, Cys-26–Cys-160, Cys-71–Cys-87, Cys-175–Cys-244, Cys-207–Cys-223, and Cys-234–Cys-264. The region spanning 40–288 (VVGGMSAEPG…YLNWIASKIG (249 aa)) is the Peptidase S1 domain. Catalysis depends on charge relay system residues His-86 and Asp-140. N-linked (GlcNAc...) asparagine glycosylation is present at Asn-208. Catalysis depends on Ser-238, which acts as the Charge relay system. 2 disordered regions span residues 296 to 376 (QLGT…PPQA) and 395 to 415 (FSSG…LPAS). Pro residues-rich tracts occupy residues 300 to 312 (PPRP…PVRP) and 328 to 367 (PPGP…PPPQ). The propeptide at 339–415 (PRPPAPPPAP…TTDLQELPAS (77 aa)) is pro-rich. Residues 395–409 (FSSGRSYYETETTDL) show a composition bias toward polar residues.

Belongs to the peptidase S1 family. As to quaternary structure, heavy chain (catalytic) and a light chain linked by two disulfide bonds. Forms a heterodimer with SERPINA5.

The catalysed reaction is Preferential cleavage: Arg-|-Xaa, Lys-|-Xaa.. Its activity is regulated as follows. Inhibited by SERPINA5. In terms of biological role, acrosin is the major protease of mammalian spermatozoa. It is a serine protease of trypsin-like cleavage specificity, it is synthesized in a zymogen form, proacrosin and stored in the acrosome. The sequence is that of Acrosin (ACR) from Sus scrofa (Pig).